Consider the following 626-residue polypeptide: Chaperone protein HtpG (626 aa).

Residues 1–331 (MSETVERHEF…TDDLPLNVSR (331 aa)) are a; substrate-binding. The interval 332 to 544 (EMLQSTPTLQ…GMGPDLQMQR (213 aa)) is b. A c region spans residues 545 to 626 (LLRRAGRGFG…GTAAKPAGSA (82 aa)).

Belongs to the heat shock protein 90 family. As to quaternary structure, homodimer.

It localises to the cytoplasm. Molecular chaperone. Has ATPase activity. The sequence is that of Chaperone protein HtpG from Methylorubrum extorquens (strain CM4 / NCIMB 13688) (Methylobacterium extorquens).